The following is a 1786-amino-acid chain: MICRVDYGSNDEEYDGPELQVVTEEDHLLPKREYLSAAFALSGLNSRASVFDDEDYDEQGGQEKEHVPVEKSFDSEEREPVVLKEEKPVKHEKEASILGNKNQMDTGDVQEELVVGLSEATLDEKRVTPLPTLYLEDDGMVILQFSEIFAIQEPQKKRQKREIRCITYRDKYISMDISELIEDDEEVLLKSHGRIDTHGKKTDQIQLDVPLPIRERSQLVKSGIVRDTTSESREFTKLGRDSCIMGELLKQDLKDDNSSLCQSQLTMEVFPLDQQEWEHLILWEISPQFSANCCEGFKSGLESAGIMVQVRASNSVTEQESLNVMNSGGQTQGDNNNMLEPFFVNPLESFGSRGSQSTNESTNKSRHHPQLLRLESQWDEDHYRENGDAGRENLKQLNSDARGRLSGLALQDRDMWDESWLDSIIWESDKDLSRSKLIFDLQDEQMIFEVPNNKERKYLQLHAGSRIVSRSSKSKDGSFQEGCGSNSGWQFNISNDKFYMNGKSAQKLQGNAKKSTVHSLRVFHSAPAIKLQTMKIKLSNKERANFHRPKALWYPHDNELAIKQQKILPTQGSMTIVVKSLGGKGSLLTVGREESVSSLKAKASRKLDFKETEAVKMFYMGKELEDEKSLAEQNVQPNSLVHLLRTKVHLWPWAQKLPGENKSLRPPGAFKKKSDLSNQDGHVFLMEYCEERPLMLSNAGMGANLCTYYQKSSPEDQHGNLLRNQSDTLGSVIILEHGNKSPFLGEVHGGCSQSSVETNMYKAPVFPHRLQSTDYLLVRSAKGKLSLRRINKIVAVGQQEPRMEIMSPASKNLHAYLVNRMMAYVYREFKHRDRIAADELSFSFSNISDATVRKYMQVCSDLERDANGKACWSKKRKFDKIPLGLNTLVAPEDVCSYESMLAGLFRLKHLGITRFTLPASISTALAQLPDERIAAASHIARELQITPWNLSSSFVTCATQGRENIERLEITGVGDPSGRGLGFSYVRVAPKSSAASEHKKKKAAACRGVPTVTGTDADPRRLSMEAAREVLLKFNVPDEIIAKQTQRHRTAMIRKISSEQAASGGKVGPTTVGMFSRSQRMSFLQLQQQAREMCHEIWDRQRLSLSACDDDGNESENEANSDLDSFVGDLEDLLDAEDGGEGEESNKSMNEKLDGVKGLKMRRWPSQVEKDEEIEDEAAEYVELCRLLMQDENDKKKKKLKDVGEGIGSFPPPRSNFEPFIDKKYIATEPDASFLIVNESTVKHTKNVDKATSKSPKDKQVKEIGTPICQMKKILKENQKVFMGKKTARANFVCGACGQHGHMKTNKHCPKYRRNTESQPESMDMKKSTGKPSSSDLSGEVWLTPIDNKKPAPKSATKISVNEATKVGDSTSKTPGSSDVAAVSEIDSGTKLTSRKLKISSKAKPKASKVESDSPFHSLMPAYSRERGESELHNPSVSGQLLPSTETDQAASSRYTTSVPQPSLSIDKDQAESCRPHRVIWPPTGKEHSQKKLVIKRLKEITDHDSGSLEETPQFESRKTKRMAELADFQRQQRLRLSENFLDWGPKDDRKWRKEQDISTELHREGKVRRAYDDSTVSEERSEIAESRRYREVIRSEREEEKRRKAKQKKKLQRGILENYPPRRNDGISSESGQNINSLCVSDFERNRTEYAPQPKRRKKGQVGLANILESIVDTLRVKEVNVSYLFLKPVTKKEAPNYLEIVKCPMDLSTIRDKVRRMEYRDRQQFRHDVWQIKFNAHLYNDGRNLSIPPLADELLVKCDRLLDEYRDELKEAEKGIVDSSDSLR.

2 disordered regions span residues 54–83 (EDYDEQGGQEKEHVPVEKSFDSEEREPVVL) and 350–372 (FGSRGSQSTNESTNKSRHHPQLL). Residues 61 to 83 (GQEKEHVPVEKSFDSEEREPVVL) show a composition bias toward basic and acidic residues. A compositionally biased stretch (polar residues) spans 352–362 (SRGSQSTNEST). The Ubiquitin-like domain occupies 574-650 (MTIVVKSLGG…VHLLRTKVHL (77 aa)). Residues 1303-1313 (MKTNKHCPKYR) are compositionally biased toward basic residues. Disordered regions lie at residues 1303 to 1382 (MKTN…DVAA), 1397 to 1471 (LKIS…KDQA), and 1596 to 1634 (SEREEEKRRKAKQKKKLQRGILENYPPRRNDGISSESGQ). The segment covering 1357-1377 (TKISVNEATKVGDSTSKTPGS) has biased composition (polar residues). Over residues 1397-1407 (LKISSKAKPKA) the composition is skewed to basic residues. Residues 1433-1464 (HNPSVSGQLLPSTETDQAASSRYTTSVPQPSL) show a composition bias toward polar residues. Coiled coils occupy residues 1591-1620 (REVIRSEREEEKRRKAKQKKKLQRGILENY) and 1752-1786 (LADELLVKCDRLLDEYRDELKEAEKGIVDSSDSLR). Residues 1604–1613 (RKAKQKKKLQ) are compositionally biased toward basic residues. Positions 1656-1774 (KRRKKGQVGL…DEYRDELKEA (119 aa)) constitute a Bromo domain.

Belongs to the TAF1 family. In terms of assembly, component of the TFIID complex. TFIID is composed of TATA binding protein (TBP) and a number of TBP-associated factors (TAFs) whose MWs range from 14-217 kDa. Expressed in roots, shoots, leaves and inflorescences.

The protein resides in the nucleus. Its function is as follows. TAFs are components of the transcription factor IID (TFIID) complex that is essential for mediating regulation of RNA polymerase transcription. Core scaffold of the TFIID complex. Acts as a histone acetyltransferase involved in the light regulation of growth and gene expression. Required for H3K9, H3K27, and H4K12 acetylation on the target promoters. In Arabidopsis thaliana (Mouse-ear cress), this protein is Transcription initiation factor TFIID subunit 1b (TAF1B).